The sequence spans 1475 residues: Sterol 3-beta-glucosyltransferase (1475 aa).

Disordered regions lie at residues 1–73 (MPPP…PPMF) and 94–218 (HDRF…EDDK). The segment covering 8–17 (LPLHGPAGAA) has biased composition (low complexity). The span at 30 to 40 (RVGKKLQKKRH) shows a compositional bias: basic residues. The span at 108–118 (GPQRDSADRSH) shows a compositional bias: basic and acidic residues. Residues 156 to 168 (EKHKRKISGHKLL) are compositionally biased toward basic residues. One can recognise a GRAM 1 domain in the interval 270–315 (QDIFEFDQPEAVIEEYPCWLLQSVLLQGYMYITAKHICFYSYLPKK). A PH domain is found at 318-413 (EVVKSGYLSK…WVKSLQRVIF (96 aa)). Disordered regions lie at residues 492 to 541 (ARLK…TTNK), 594 to 636 (SSPR…MEEP), and 653 to 715 (QILR…PVTP). Low complexity predominate over residues 505–531 (QQQQQQHPMQPPMQASARSSMSGSRRA). Polar residues-rich tracts occupy residues 621 to 634 (QQGS…SSME) and 653 to 674 (QILR…SASR). Residues 675–686 (TEVEKQQRRDPR) are compositionally biased toward basic and acidic residues. The 104-residue stretch at 798-901 (RFRAHFALPE…RDDCAVTLLQ (104 aa)) folds into the GRAM 2 domain. Positions 989, 990, 992, 1293, 1295, 1308, 1311, 1312, 1313, 1332, and 1333 each coordinate UDP-alpha-D-glucose. Positions 1413–1475 (IQVEPDEDEE…RVSPSQQSVA (63 aa)) are disordered. A compositionally biased stretch (acidic residues) spans 1416-1425 (EPDEDEESAE).

The protein belongs to the glycosyltransferase 28 family.

Its subcellular location is the cytoplasm. It localises to the preautophagosomal structure membrane. The catalysed reaction is a sterol + UDP-alpha-D-glucose = a sterol 3-beta-D-glucoside + UDP + H(+). It catalyses the reaction ergosterol + UDP-alpha-D-glucose = ergosteryl 3-beta-D-glucoside + UDP + H(+). In terms of biological role, sterol glycosyltransferase responsible for the glycosylation of ergosterol to form ergosterol-glucoside. Mediates autophagic degradation of peroxisomes (pexophagy) and is involved in pathogenesis via peroxisome degradation inside appressoria that are developing into the host invasion stage. The chain is Sterol 3-beta-glucosyltransferase from Glomerella lagenarium (Anthracnose fungus).